Reading from the N-terminus, the 212-residue chain is Probable transaldolase (212 aa).

K83 functions as the Schiff-base intermediate with substrate in the catalytic mechanism.

It belongs to the transaldolase family. Type 3B subfamily.

The protein resides in the cytoplasm. It carries out the reaction D-sedoheptulose 7-phosphate + D-glyceraldehyde 3-phosphate = D-erythrose 4-phosphate + beta-D-fructose 6-phosphate. Its pathway is carbohydrate degradation; pentose phosphate pathway; D-glyceraldehyde 3-phosphate and beta-D-fructose 6-phosphate from D-ribose 5-phosphate and D-xylulose 5-phosphate (non-oxidative stage): step 2/3. In terms of biological role, transaldolase is important for the balance of metabolites in the pentose-phosphate pathway. The sequence is that of Probable transaldolase (tal) from Halalkalibacterium halodurans (strain ATCC BAA-125 / DSM 18197 / FERM 7344 / JCM 9153 / C-125) (Bacillus halodurans).